The sequence spans 576 residues: Low-affinity glucose transporter HXT4 (576 aa).

A disordered region spans residues Met1–Asn56. Topologically, residues Met1 to Ser66 are cytoplasmic. Polar residues predominate over residues Glu25–Asn37. The segment covering Lys38 to Ser54 has biased composition (basic and acidic residues). Lys45 is covalently cross-linked (Glycyl lysine isopeptide (Lys-Gly) (interchain with G-Cter in ubiquitin)). A helical membrane pass occupies residues Ala67 to Trp87. Residues Asp88–Gly122 are Extracellular-facing. The chain crosses the membrane as a helical span at residues Leu123–Gly143. Residues Asp144–Lys149 are Cytoplasmic-facing. The chain crosses the membrane as a helical span at residues Met150 to Ile170. Over Asn171–Arg180 the chain is Extracellular. Residues Ile181 to Val201 form a helical membrane-spanning segment. Topologically, residues Ser202–Arg207 are cytoplasmic. Residues Gly208 to Thr228 form a helical membrane-spanning segment. Over Asn229–Arg242 the chain is Extracellular. A helical membrane pass occupies residues Val243–Pro263. The Cytoplasmic portion of the chain corresponds to Glu264 to Asp346. The chain crosses the membrane as a helical span at residues Asn347 to Ser363. Residues Asp364–Ser369 lie on the Extracellular side of the membrane. Residues Ile370–Val387 traverse the membrane as a helical segment. Residues Glu388 to Arg394 lie on the Cytoplasmic side of the membrane. The chain crosses the membrane as a helical span at residues Cys395 to Val415. Topologically, residues Thr416–Val437 are extracellular. Asn425 carries an N-linked (GlcNAc...) asparagine glycan. A helical membrane pass occupies residues Phe438–Asn458. The Cytoplasmic portion of the chain corresponds to Ser459 to Gln475. The chain crosses the membrane as a helical span at residues Ala476–Ile496. A topological domain (extracellular) is located at residue Asp497. Residues Phe498–Phe518 form a helical membrane-spanning segment. At Val519 to Lys576 the chain is on the cytoplasmic side.

It belongs to the major facilitator superfamily. Sugar transporter (TC 2.A.1.1) family.

It is found in the cell membrane. With respect to regulation, xylose uptake is strongly inhibited by glucose. Low-affinity glucose transporter. Can also transport xylose. The polypeptide is Low-affinity glucose transporter HXT4 (HXT4) (Saccharomyces cerevisiae (strain JAY291) (Baker's yeast)).